Here is an 818-residue protein sequence, read N- to C-terminus: MLLWSGICGLSPPRIFPSLLVVVALVGLLPVLRSHGLQPSPTASTIRGSEPPRERSIGDVTTAPPELAPESRPVNHSVTEHGMKARKAFPVLGIDYTHVRTPFEISLWILLACLMKIGFHVIPTISSIVPESCLLIVVGLLVGGLIKAVGETPPFLQSEVFFLFLLPPIILDAGYFLPLRQFTENLGTILIFAVVGTLWNAFFLGGLMYAVCLVGGEQINNIGLLDNLLFGSIISAVDPVAVLAVFEEIHINELLHILVFGESLLNDAVTVVLYHLFEEFANYDRVGIVDIVLGFLSFFVVSLGGVFVGVVYGVIAAFTSRFTSHIRVIEPLFVFLYSYMAYLSAELFHLSGIMALIASGVVMRPYVEANISHKSHTTIKYFLKMWSSVSETLIFIFLGVSTVAGSHHWNWTFVISTLLFCLIARVLGVLGLTWFINKFRIVKLTPKDQFIIAYGGLRGAIAFSLGHLLDKNHFPMCDLFLTAIITVIFFTVFVQGMTIRPLVDLLAVKKKQETKRSINEEIHTQFLDHLLTGIEDICGHYGHHHWKDKLNRFNKKYVKKCLIAGERSKEPQLIAFYHKMEMKQAIELVESGGMGKIPSAVSTVSMQNIHPKTLPTERILPALSKDKEEEIRKILRNNLQKTRQRLRSYNRHTLVADPYEEAWNQMLLRRQKARQLEQKINNHLTVPAHKLDSPTMSRARIGSDPLAYEPKADLPVITIDPASPQSPESVDLVNEELKGKVLGLSREPGRATEEEDDDEDHDGGLVMRTKEPSSPGTDDVFTPAPSDSPSSQRIQRCLSDPGPHPEPGEGEPFIPKGQ.

Over 1–98 (MLLWSGICGL…FPVLGIDYTH (98 aa)) the chain is Extracellular. The interval 39–76 (PSPTASTIRGSEPPRERSIGDVTTAPPELAPESRPVNH) is disordered. N-linked (GlcNAc...) asparagine glycosylation occurs at N75. The chain crosses the membrane as a helical span at residues 99-121 (VRTPFEISLWILLACLMKIGFHV). Over 122–130 (IPTISSIVP) the chain is Cytoplasmic. Residues 131–148 (ESCLLIVVGLLVGGLIKA) form a helical membrane-spanning segment. Residues 149–158 (VGETPPFLQS) are Extracellular-facing. The helical transmembrane segment at 159-176 (EVFFLFLLPPIILDAGYF) threads the bilayer. Over 177 to 186 (LPLRQFTENL) the chain is Cytoplasmic. A helical transmembrane segment spans residues 187-215 (GTILIFAVVGTLWNAFFLGGLMYAVCLVG). The Extracellular portion of the chain corresponds to 216–222 (GEQINNI). Residues 223 to 249 (GLLDNLLFGSIISAVDPVAVLAVFEEI) traverse the membrane as a helical segment. At 250–252 (HIN) the chain is on the cytoplasmic side. Residues 253–283 (ELLHILVFGESLLNDAVTVVLYHLFEEFANY) traverse the membrane as a helical segment. Residues 284 to 287 (DRVG) are Extracellular-facing. Residues 288 to 322 (IVDIVLGFLSFFVVSLGGVFVGVVYGVIAAFTSRF) form a helical membrane-spanning segment. Over 323-328 (TSHIRV) the chain is Cytoplasmic. The helical transmembrane segment at 329-341 (IEPLFVFLYSYMA) threads the bilayer. Residues 342-350 (YLSAELFHL) are Extracellular-facing. The helical transmembrane segment at 351-371 (SGIMALIASGVVMRPYVEANI) threads the bilayer. Topologically, residues 372 to 373 (SH) are cytoplasmic. Residues 374–404 (KSHTTIKYFLKMWSSVSETLIFIFLGVSTVA) form a helical membrane-spanning segment. Residues 405–410 (GSHHWN) are Extracellular-facing. A helical transmembrane segment spans residues 411–438 (WTFVISTLLFCLIARVLGVLGLTWFINK). The Cytoplasmic segment spans residues 439–444 (FRIVKL). A helical transmembrane segment spans residues 445 to 469 (TPKDQFIIAYGGLRGAIAFSLGHLL). The Extracellular portion of the chain corresponds to 470–475 (DKNHFP). A helical transmembrane segment spans residues 476 to 505 (MCDLFLTAIITVIFFTVFVQGMTIRPLVDL). The interaction with TESC stretch occupies residues 503 to 545 (VDLLAVKKKQETKRSINEEIHTQFLDHLLTGIEDICGHYGHHH). At 506-818 (LAVKKKQETK…EGEPFIPKGQ (313 aa)) the chain is on the cytoplasmic side. Positions 509–516 (KKKQETKR) are PI(4,5)P2-binding region. Positions 515–545 (KRSINEEIHTQFLDHLLTGIEDICGHYGHHH) are interaction with CHP2. The segment at 540-545 (HYGHHH) is confers pH-dependent PI(4,5)P2 binding. Residues 552–560 (RFNKKYVKK) form a PI(4,5)P2-binding region region. A phosphoserine mark is found at S599 and S602. Residue T603 is modified to Phosphothreonine. 2 positions are modified to phosphoserine: S605 and S648. Residues 633–818 (KILRNNLQKT…EGEPFIPKGQ (186 aa)) are interaction with TESC. Positions 633 to 818 (KILRNNLQKT…EGEPFIPKGQ (186 aa)) are interaction with CALM1. The interval 684–687 (LTVP) is interaction with PPP3CA. S693, S697, and S703 each carry phosphoserine. Positions 715–720 (PVITID) are interaction with PPP3CA. A phosphoserine mark is found at S723, S726, and S729. A disordered region spans residues 739 to 818 (GKVLGLSREP…EGEPFIPKGQ (80 aa)). A phosphothreonine mark is found at T752 and T782. The span at 785 to 794 (PSDSPSSQRI) shows a compositional bias: polar residues. Phosphoserine occurs at positions 788, 790, and 799.

Belongs to the monovalent cation:proton antiporter 1 (CPA1) transporter (TC 2.A.36) family. In terms of assembly, homodimer; dimerization is crucial for its function. Oligomer. Interacts with CALM in a calcium-dependent manner. Interacts with TESC. Interacts (via the juxtamembrane region of the cytoplasmic C-terminal domain) with CHP1; the interaction occurs at the plasma membrane in a calcium-dependent manner. Interacts with CHP2; the interaction occurs in a calcium-dependent manner. Interacts with EZR; regulates the cytoskeletal interactions of SLC9A1 and promotes stress fiber formation. In terms of processing, ubiquitinated, leading to its degradation by the proteasome. Ubiquitination is reduced by CHP1. O-glycosylated. Post-translationally, palmitoylated; may play a major role in SLC9A1 regulation. In terms of processing, phosphorylation at Thr-782 increases SLC9A1 activity. Specifically dephosphorylated at Thr-782 by PPP3CA that negatively regulates SLC9A1 activity. Phosphorylation at Ser-648 by AKT1 reduces SLC9A1 binding to CALM1.

It localises to the cell membrane. The protein localises to the basolateral cell membrane. It carries out the reaction Na(+)(in) + H(+)(out) = Na(+)(out) + H(+)(in). The enzyme catalyses Li(+)(out) + H(+)(in) = Li(+)(in) + H(+)(out). It catalyses the reaction Li(+)(in) + Na(+)(out) = Li(+)(out) + Na(+)(in). Activated at acidic pHs. Inhibited by cariporide and eniporide. Inhibited by amiloride and 5-amino-substituted derivatives. Phosphatidylinositol 4,5-bisphosphate (PI(4,5)P2) and phosphatidylinositol 3,4,5-trisphosphate (PI(3,4,5)P3) bind and differentially regulate SLC9A1 activity. Electroneutral Na(+) /H(+) antiporter that extrudes Na(+) in exchange for external protons driven by the inward sodium ion chemical gradient, protecting cells from acidification that occurs from metabolism. Exchanges intracellular H(+) ions for extracellular Na(+) in 1:1 stoichiometry. Plays a key role in maintening intracellular pH neutral and cell volume, and thus is important for cell growth, proliferation, migration and survival. In addition, can transport lithium Li(+) and also functions as a Na(+)/Li(+) antiporter. SLC9A1 also functions in membrane anchoring and organization of scaffolding complexes that coordinate signaling inputs. The sequence is that of Sodium/hydrogen exchanger 1 (SLC9A1) from Sus scrofa (Pig).